Here is a 361-residue protein sequence, read N- to C-terminus: Free fatty acid receptor 4 (361 aa).

Over 1–45 (MSPECARAAGDAPLRSLEQANRTRFPFFSDVKGDHRLVLAAVETT) the chain is Extracellular. Asn-21 is a glycosylation site (N-linked (GlcNAc...) asparagine). The chain crosses the membrane as a helical span at residues 46 to 66 (VLVLIFAVSLLGNVCALVLVA). Over 67-77 (RRRRRGATACL) the chain is Cytoplasmic. Residues 78 to 98 (VLNLFCADLLFISAIPLVLAV) traverse the membrane as a helical segment. Residues 99–112 (RWTEAWLLGPVACH) are Extracellular-facing. Cys-111 and Cys-194 are oxidised to a cystine. Residues 113–133 (LLFYVMTLSGSVTILTLAAVS) traverse the membrane as a helical segment. Residues 134–156 (LERMVCIVHLQRGVRGPGRRARA) are Cytoplasmic-facing. The helical transmembrane segment at 157–177 (VLLALIWGYSAVAALPLCVFF) threads the bilayer. Residues 178–204 (RVVPQRLPGADQEISICTLIWPTIPGE) lie on the Extracellular side of the membrane. The chain crosses the membrane as a helical span at residues 205–225 (ISWDVSFVTLNFLVPGLVIVI). The Cytoplasmic portion of the chain corresponds to 226–268 (SYSKILQITKASRKRLTVSLAYSESHQIRVSQQDFRLFRTLFL). Residues 269–289 (LMVSFFIMWSPIIITILLILI) form a helical membrane-spanning segment. Residues 290-295 (QNFKQD) are Extracellular-facing. The helical transmembrane segment at 296–316 (LVIWPSLFFWVVAFTFANSAL) threads the bilayer. The Cytoplasmic portion of the chain corresponds to 317–361 (NPILYNMTLCRNEWKKIFCCFWFPEKGAILTDTSVKRNDLSIISG). Residues Thr-347 and Thr-349 each carry the phosphothreonine modification. 3 positions are modified to phosphoserine: Ser-350, Ser-357, and Ser-360.

Belongs to the G-protein coupled receptor 1 family. In terms of assembly, interacts (via C-terminus) with ARRB2 following LCFAs stimulation. In terms of processing, phosphorylated at two clusters of Ser and Thr residues located in the intracellular C-terminus, a prerequisite for FFAR4 internalization via an ARRB2-dependent pathway. The predominant isoform in human tissues. Expressed in adipose tissue, pancreatic islets, lung and brain. Expressed in alpha cells of pancreatic islets. Expressed in primary cilia of perivascular preadipocytes of white adipose tissue (at protein level). As to expression, abundant expression in the intestinal tract. Expressed in colonic intraepithelial neuroendocrine cells.

The protein resides in the cell membrane. It is found in the endosome membrane. Its subcellular location is the lysosome membrane. The protein localises to the cell projection. It localises to the cilium membrane. G-protein-coupled receptor for long-chain fatty acids (LCFAs) with a major role in adipogenesis, energy metabolism and inflammation. Signals via G-protein and beta-arrestin pathways. LCFAs sensing initiates activation of phosphoinositidase C-linked G proteins GNAQ and GNA11 (G(q)/G(11)), inducing a variety of cellular responses via second messenger pathways such as intracellular calcium mobilization, modulation of cyclic adenosine monophosphate (cAMP) production, and mitogen-activated protein kinases (MAPKs). After LCFAs binding, associates with beta-arrestin ARRB2 that acts as an adapter protein coupling the receptor to specific downstream signaling pathways, as well as mediating receptor endocytosis. In response to dietary fats, plays an important role in the regulation of adipocyte proliferation and differentiation. Acts as a receptor for omega-3 polyunsaturated fatty acids (PUFAs) at primary cilium of perivascular preadipocytes, initiating an adipogenic program via cAMP and CTCF-dependent chromatin remodeling that ultimately results in transcriptional activation of adipogenic genes and cell cycle entry. Induces differentiation of brown adipocytes probably via autocrine and endocrine functions of FGF21 hormone. Activates brown adipocytes by initiating intracellular calcium signaling that leads to mitochondrial depolarization and fission, and overall increased mitochondrial respiration. Consequently stimulates fatty acid uptake and oxidation in mitochondria together with UCP1-mediated thermogenic respiration, eventually reducing fat mass. Regulates bi-potential differentiation of bone marrow mesenchymal stem cells toward osteoblasts or adipocytes likely by up-regulating distinct integrins. In response to dietary fats regulates hormone secretion and appetite. Stimulates GIP and GLP1 secretion from enteroendocrine cells as well as GCG secretion in pancreatic alpha cells, thereby playing a role in the regulation of blood glucose levels. Negatively regulates glucose-induced SST secretion in pancreatic delta cells. Mediates LCFAs inhibition of GHRL secretion, an appetite-controlling hormone. In taste buds, contributes to sensing of dietary fatty acids by the gustatory system. During the inflammatory response, promotes anti-inflammatory M2 macrophage differentiation in adipose tissue. Mediates the anti-inflammatory effects of omega-3 PUFAs via inhibition of NLRP3 inflammasome activation. In this pathway, interacts with adapter protein ARRB2 and inhibits the priming step triggered by Toll-like receptors (TLRs) at the level of TAK1 and TAB1. Further inhibits the activation step when ARRB2 directly associates with NLRP3, leading to inhibition of pro-inflammatory cytokine release. Mediates LCFAs anti-apoptotic effects. Its function is as follows. Receptor for LCFAs decoupled from G-protein signaling. May signal through beta-arrestin pathway. After LCFAs binding, associates with beta-arrestin ARRB2 that may act as an adapter protein coupling the receptor to specific downstream signaling pathways, as well as mediating receptor endocytosis. In Homo sapiens (Human), this protein is Free fatty acid receptor 4.